A 371-amino-acid polypeptide reads, in one-letter code: Cytochrome b (371 aa).

4 consecutive transmembrane segments (helical) span residues 25-45 (FGSMLLTCLGLQVLTGFFLAV), 69-90 (WMMQNLHAIGASMFFICIYIHI), 105-125 (WMSGITLLITLMATAFFGYVL), and 170-190 (FFALHFILPFAIISLSSLHII). Heme b-binding residues include histidine 75 and histidine 89. Heme b is bound by residues histidine 174 and histidine 188. Histidine 193 contributes to the a ubiquinone binding site. Transmembrane regions (helical) follow at residues 218–238 (HKDLLLLTLMIMSLFIISSFF), 280–300 (LGGALALVMSIMILFIIPFTH), 312–332 (LSQLMFWTLVSTFITITWAAT), and 339–358 (FIVISQVTSSLYFTFFLSTP).

The protein belongs to the cytochrome b family. The cytochrome bc1 complex contains 3 respiratory subunits (MT-CYB, CYC1 and UQCRFS1), 2 core proteins (UQCRC1 and UQCRC2) and probably 6 low-molecular weight proteins. Heme b is required as a cofactor.

The protein resides in the mitochondrion inner membrane. Functionally, component of the ubiquinol-cytochrome c reductase complex (complex III or cytochrome b-c1 complex) that is part of the mitochondrial respiratory chain. The b-c1 complex mediates electron transfer from ubiquinol to cytochrome c. Contributes to the generation of a proton gradient across the mitochondrial membrane that is then used for ATP synthesis. The chain is Cytochrome b (MT-CYB) from Aspidites melanocephalus (Black-headed python).